Reading from the N-terminus, the 1349-residue chain is Protein strawberry notch homolog 2 (1349 aa).

3 disordered regions span residues 170–212, 609–633, and 1319–1349; these read YQSH…QHPD, STRRRRDRGGGKRKRRPRGRGPKAS, and PTETPAPLVGVGGGGTERQSVIHFSPPFPNS. Residues 177-188 show a composition bias toward acidic residues; that stretch reads EEEEGEEEEETE. A compositionally biased stretch (basic residues) spans 609–631; sequence STRRRRDRGGGKRKRRPRGRGPK.

This sequence belongs to the SBNO family. In terms of assembly, interacts with TAL1; this interaction inhibits TAL1 occupancy of the DCSTAMP promoter, leading to the activation of the DCSTAMP promoter by the transcription factor MITF. Expressed in the spleen and bone marrow, and to a lesser extent in the kidney, liver, brain, skin, heart and muscle. Expressed predominantly in osteoclasts, and to a lesser extent in T-cells, B-cells and osteoblasts. Expressed in macrophages.

Acts as a transcriptional coregulator, that can have both coactivator and corepressor functions. Inhibits the DCSTAMP-repressive activity of TAL1, hence enhancing the access of the transcription factor MITF to the DC-STAMP promoter in osteoclast. Plays a role in bone homeostasis; required as a positive regulator in TNFSF11//RANKL-mediated osteoclast fusion via a DCSTAMP-dependent pathway. May also be required in the regulation of osteoblast differentiation. Involved in the transcriptional corepression of NF-kappaB in macrophages. Plays a role as a regulator in the pro-inflammatory cascade. The sequence is that of Protein strawberry notch homolog 2 (Sbno2) from Mus musculus (Mouse).